A 472-amino-acid chain; its full sequence is UDP-N-acetylmuramate--L-alanine ligase (472 aa).

Residue 121 to 127 (GTHGKTT) coordinates ATP.

The protein belongs to the MurCDEF family.

The protein resides in the cytoplasm. The catalysed reaction is UDP-N-acetyl-alpha-D-muramate + L-alanine + ATP = UDP-N-acetyl-alpha-D-muramoyl-L-alanine + ADP + phosphate + H(+). It functions in the pathway cell wall biogenesis; peptidoglycan biosynthesis. In terms of biological role, cell wall formation. This chain is UDP-N-acetylmuramate--L-alanine ligase, found in Hahella chejuensis (strain KCTC 2396).